The following is a 318-amino-acid chain: Ribose-phosphate pyrophosphokinase 2 (318 aa).

96-101 (RQDKKD) contributes to the ATP binding site. 4 residues coordinate Mg(2+): Asp128, His130, Asp139, and Asp143. His130 is an ATP binding site. The segment at 212-227 (KDRVAILVDDMADTCG) is binding of phosphoribosylpyrophosphate.

This sequence belongs to the ribose-phosphate pyrophosphokinase family. Homodimer. The active form is probably a hexamer composed of 3 homodimers. The cofactor is Mg(2+).

It carries out the reaction D-ribose 5-phosphate + ATP = 5-phospho-alpha-D-ribose 1-diphosphate + AMP + H(+). The protein operates within metabolic intermediate biosynthesis; 5-phospho-alpha-D-ribose 1-diphosphate biosynthesis; 5-phospho-alpha-D-ribose 1-diphosphate from D-ribose 5-phosphate (route I): step 1/1. With respect to regulation, activated by magnesium and inorganic phosphate. Competitively or non-competitively inhibited by ADP, 2,3-bisphosphoglyceride or GDP. Catalyzes the synthesis of phosphoribosylpyrophosphate (PRPP) that is essential for nucleotide synthesis. This Mus musculus (Mouse) protein is Ribose-phosphate pyrophosphokinase 2 (Prps2).